The sequence spans 108 residues: uncharacterized protein (108 aa).

The tract at residues 56–108 is disordered; that stretch reads ELPSRGCLPAPRPESGQGRLSTGISQNGGRSSAQPCPRCIAGESGHFSHTKNH. Residues 73-89 are compositionally biased toward polar residues; it reads GRLSTGISQNGGRSSAQ.

This is an uncharacterized protein from Homo sapiens (Human).